A 660-amino-acid chain; its full sequence is Cysteine-rich receptor-like protein kinase 22 (660 aa).

A signal peptide spans 1-24; it reads MKQRSFLSILCFILLAFGVASVSA. Gnk2-homologous domains follow at residues 25-128 and 137-250; these read QTCI…NISF and IEPQ…LFTF. At 25–294 the chain is on the extracellular side; sequence QTCIENRKYF…DSRGVSAGIV (270 aa). Residues asparagine 37, asparagine 53, asparagine 105, asparagine 125, asparagine 191, asparagine 230, and asparagine 256 are each glycosylated (N-linked (GlcNAc...) asparagine). The segment covering 264 to 273 has biased composition (pro residues); it reads KPPMNVPRPP. The disordered stretch occupies residues 264–283; sequence KPPMNVPRPPSVGHGANTTD. N-linked (GlcNAc...) asparagine glycans are attached at residues asparagine 280 and asparagine 284. Residues 295 to 315 traverse the membrane as a helical segment; that stretch reads VVITVPAVVIVLILVVLGFFI. Over 316–660 the chain is Cytoplasmic; it reads CWRRKSLQRT…DPLSEGLESG (345 aa). The 280-residue stretch at 353 to 632 folds into the Protein kinase domain; sequence FSKSNKLGEG…IVSMLTSNTI (280 aa). ATP contacts are provided by residues 359-367 and lysine 381; that span reads LGEGRFGEV. Tyrosine 426 is modified (phosphotyrosine). The active-site Proton acceptor is the aspartate 478. Serine 482 bears the Phosphoserine mark. At threonine 518 the chain carries Phosphothreonine. Tyrosine 526 carries the post-translational modification Phosphotyrosine.

This sequence belongs to the protein kinase superfamily. Ser/Thr protein kinase family. CRK subfamily.

The protein resides in the membrane. The catalysed reaction is L-seryl-[protein] + ATP = O-phospho-L-seryl-[protein] + ADP + H(+). It catalyses the reaction L-threonyl-[protein] + ATP = O-phospho-L-threonyl-[protein] + ADP + H(+). This is Cysteine-rich receptor-like protein kinase 22 (CRK22) from Arabidopsis thaliana (Mouse-ear cress).